Here is a 590-residue protein sequence, read N- to C-terminus: L-erythrulose kinase (590 aa).

The 325-residue stretch at glutamine 7–phenylalanine 331 folds into the DhaK domain. The active-site Tele-hemiaminal-histidine intermediate is histidine 217. The 203-residue stretch at histidine 366 to alanine 568 folds into the DhaL domain. Residues histidine 398 to glycine 401, threonine 441 to serine 442, glycine 483, arginine 540, and aspartate 553 to glycine 555 each bind ADP.

It catalyses the reaction L-erythrulose + ATP = L-erythrulose 1-phosphate + ADP + H(+). Its pathway is carbohydrate metabolism. Its function is as follows. Involved in catabolism of D-apiose. Catalyzes the phosphorylation of L-erythrulose to L-erythrulose 1-phosphate. Can also phosphorylate D-erythrulose and dihydroxyacetone in vitro. This chain is L-erythrulose kinase, found in Pectobacterium atrosepticum (strain SCRI 1043 / ATCC BAA-672) (Erwinia carotovora subsp. atroseptica).